The chain runs to 652 residues: uncharacterized protein (652 aa).

Composition is skewed to basic and acidic residues over residues 1–13 (MSVT…TERK) and 641–652 (ATERTDNLADAA). Disordered regions lie at residues 1 to 21 (MSVT…PAKT) and 628 to 652 (VPGW…ADAA).

This sequence belongs to the ParB family.

This is an uncharacterized protein from Escherichia coli O157:H7.